Here is a 149-residue protein sequence, read N- to C-terminus: Small ribosomal subunit protein bS6 (149 aa).

Residues 94-149 (EKHEEGPSAMMQKRDRDDRPRRDGDRPDRGGFGDRGPRPDRGDRDDRPRRPREDRA) are disordered.

The protein belongs to the bacterial ribosomal protein bS6 family.

In terms of biological role, binds together with bS18 to 16S ribosomal RNA. In Sinorhizobium fredii (strain NBRC 101917 / NGR234), this protein is Small ribosomal subunit protein bS6.